A 299-amino-acid polypeptide reads, in one-letter code: Bifunctional protein FolD 2 (299 aa).

Residues Gly-168 to Ser-170, Ser-193, and Ile-234 each bind NADP(+).

Belongs to the tetrahydrofolate dehydrogenase/cyclohydrolase family. Homodimer.

It carries out the reaction (6R)-5,10-methylene-5,6,7,8-tetrahydrofolate + NADP(+) = (6R)-5,10-methenyltetrahydrofolate + NADPH. The catalysed reaction is (6R)-5,10-methenyltetrahydrofolate + H2O = (6R)-10-formyltetrahydrofolate + H(+). It participates in one-carbon metabolism; tetrahydrofolate interconversion. Its function is as follows. Catalyzes the oxidation of 5,10-methylenetetrahydrofolate to 5,10-methenyltetrahydrofolate and then the hydrolysis of 5,10-methenyltetrahydrofolate to 10-formyltetrahydrofolate. In Rhizobium etli (strain ATCC 51251 / DSM 11541 / JCM 21823 / NBRC 15573 / CFN 42), this protein is Bifunctional protein FolD 2.